Reading from the N-terminus, the 282-residue chain is Bifunctional protein FolD (282 aa).

Residues G164–S166, I189, and I230 contribute to the NADP(+) site.

Belongs to the tetrahydrofolate dehydrogenase/cyclohydrolase family. As to quaternary structure, homodimer.

It carries out the reaction (6R)-5,10-methylene-5,6,7,8-tetrahydrofolate + NADP(+) = (6R)-5,10-methenyltetrahydrofolate + NADPH. The enzyme catalyses (6R)-5,10-methenyltetrahydrofolate + H2O = (6R)-10-formyltetrahydrofolate + H(+). It functions in the pathway one-carbon metabolism; tetrahydrofolate interconversion. In terms of biological role, catalyzes the oxidation of 5,10-methylenetetrahydrofolate to 5,10-methenyltetrahydrofolate and then the hydrolysis of 5,10-methenyltetrahydrofolate to 10-formyltetrahydrofolate. This chain is Bifunctional protein FolD, found in Campylobacter jejuni (strain RM1221).